The following is a 462-amino-acid chain: MNTSPRTLKTIAILGQPNVGKSSLFNRLAKERIAITSDFVGTTRDINKRKITLNGHEVELLDTGGMAKDAFLSKEIKAFNLKAAQMSDLILYVVDGKSIPSDEDIKLFREIFKINPNCFLVINKIDNDKEKERSYAFSSFGMPKSFNISVSHNRGISALIDAILDALGLTKIIEQDLDIDILESLETPNNTEDGNNEEEIIQVGIIGRVNVGKSSLLNVLTQKERSIVSSVAGTTIDPIDETILVKNQKICFVDTAGIRHKGKILGIEKYALERTQKALEKSHIALLVLDVSAPFVELDEKISSLADKHSLGIILILNKWDIRYAPYEEIMATLKRKFRFLEYAPVITTSCLKTRHIEEIKHKIIEVYECFSKRIPTSLLNSVISQATQKHPLPSDGGKLVKVYYATQFATKPPQISLVMNRPKALHFSYKRYLINTLRKEFNFLGTPLIINAKDKKSVQQN.

EngA-type G domains lie at 9–171 and 201–372; these read KTIA…GLTK and IQVG…ECFS. GTP is bound by residues 15-22, 62-66, 123-126, 207-214, 254-258, and 318-321; these read GQPNVGKS, DTGGM, NKID, GRVNVGKS, DTAGI, and NKWD. In terms of domain architecture, KH-like spans 373–457; that stretch reads KRIPTSLLNS…PLIINAKDKK (85 aa).

Belongs to the TRAFAC class TrmE-Era-EngA-EngB-Septin-like GTPase superfamily. EngA (Der) GTPase family. As to quaternary structure, associates with the 50S ribosomal subunit.

GTPase that plays an essential role in the late steps of ribosome biogenesis. This is GTPase Der from Helicobacter acinonychis (strain Sheeba).